We begin with the raw amino-acid sequence, 269 residues long: Aminodeoxychorismate lyase (269 aa).

Lys-140 carries the N6-(pyridoxal phosphate)lysine modification.

It belongs to the class-IV pyridoxal-phosphate-dependent aminotransferase family. As to quaternary structure, homodimer. It depends on pyridoxal 5'-phosphate as a cofactor.

It catalyses the reaction 4-amino-4-deoxychorismate = 4-aminobenzoate + pyruvate + H(+). The protein operates within cofactor biosynthesis; tetrahydrofolate biosynthesis; 4-aminobenzoate from chorismate: step 2/2. In terms of biological role, involved in the biosynthesis of p-aminobenzoate (PABA), a precursor of tetrahydrofolate. Converts 4-amino-4-deoxychorismate into 4-aminobenzoate (PABA) and pyruvate. The protein is Aminodeoxychorismate lyase (pabC) of Escherichia coli (strain K12).